Consider the following 199-residue polypeptide: NAD(P)H dehydrogenase (quinone) (199 aa).

Residues 4–190 (VLVLYHSMYG…AIARFQGKHV (187 aa)) form the Flavodoxin-like domain. Residues 10-15 (SMYGHI) and 79-81 (TRF) each bind FMN. Position 12 (Tyr-12) interacts with NAD(+). Trp-99 lines the substrate pocket. Residue His-134 coordinates FMN.

This sequence belongs to the WrbA family. It depends on FMN as a cofactor.

The enzyme catalyses a quinone + NADH + H(+) = a quinol + NAD(+). It catalyses the reaction a quinone + NADPH + H(+) = a quinol + NADP(+). The polypeptide is NAD(P)H dehydrogenase (quinone) (Tolumonas auensis (strain DSM 9187 / NBRC 110442 / TA 4)).